Reading from the N-terminus, the 519-residue chain is Glucose-1-phosphate adenylyltransferase large subunit 2, chloroplastic/amyloplastic (519 aa).

It belongs to the bacterial/plant glucose-1-phosphate adenylyltransferase family. Heterotetramer. In terms of tissue distribution, leaves and tubers.

It localises to the plastid. It is found in the chloroplast. The protein resides in the amyloplast. It carries out the reaction alpha-D-glucose 1-phosphate + ATP + H(+) = ADP-alpha-D-glucose + diphosphate. The protein operates within glycan biosynthesis; starch biosynthesis. With respect to regulation, activated by 3'phosphoglycerate, inhibited by orthophosphate. Allosteric regulation. This protein plays a role in synthesis of starch. It catalyzes the synthesis of the activated glycosyl donor, ADP-glucose from Glc-1-P and ATP. The chain is Glucose-1-phosphate adenylyltransferase large subunit 2, chloroplastic/amyloplastic (AGPS2) from Solanum tuberosum (Potato).